The chain runs to 141 residues: Large ribosomal subunit protein uL13 (141 aa).

It belongs to the universal ribosomal protein uL13 family. As to quaternary structure, part of the 50S ribosomal subunit.

Its function is as follows. This protein is one of the early assembly proteins of the 50S ribosomal subunit, although it is not seen to bind rRNA by itself. It is important during the early stages of 50S assembly. The sequence is that of Large ribosomal subunit protein uL13 from Deinococcus deserti (strain DSM 17065 / CIP 109153 / LMG 22923 / VCD115).